The chain runs to 189 residues: uncharacterized protein (189 aa).

One can recognise a Macro domain in the interval 1–174 (MKCWTLGDRV…GMEKGVREAL (174 aa)).

This is an uncharacterized protein from Aeropyrum pernix (strain ATCC 700893 / DSM 11879 / JCM 9820 / NBRC 100138 / K1).